The following is a 711-amino-acid chain: MAKTKSRGRRVEKSADKLEKKAQSLFEDTKSTGEEGGDDSNEIDASLKSPFFGLVDSNELDYFKQAESTLNVNAFDSDEDREGFIRSVLEEARGKELKLVTNQICSKLMERLILFASDRQLKNIFGQFSGHFVALAHHKYSSHVLETLLVRSAALIEKELIHDDSSQNEEEREEQEEGEVTDPMEGLFIKMVDEFKPHLQGMLEHQYSSHVLRLLILILAGKELPSTTTSNSTLRSKKSKIARKMIEIKDNQDFNKSFQTPSSFKIQLRELCNSVSNNQNSKRMRELAIHKIASPVLQLLIQVEGLVDRDRTFWHLIFLKDSEDKNSQEEAFVEYLLSDSVGSHFLEATIKNDGARIKYIERLYKLYMEDRILKLAKRSTTGVYIIQALLFKLKPVDVEHILDEIIPELSNLISISENQNLDLGQRLIDASISRGNYRRDEIIEQLFLKFAPNYNVQDPQLKTTSEFIENVLQLTGSTLGNTRDDWPTAEERRRSFFLEKLMEYDYKFVICVWYNFLALPVERFIQMCFHGVFSHIVERALVVIPSSEGEPKPVLILRKRVLNLFKDQIVNMSCNSYGSHIVDALWNFSVLLPMYKDRIGTELQGDSHKVKESTYGRLVWKNWSMELFVRKKYDWKSLIKQQEQAYYGVNDENGTTSRVKKPIELKMEKLAEERRLREEAAAKSESGYKRRHEDDNEDDYAKKQKLRGRRR.

The tract at residues 1–43 (MAKTKSRGRRVEKSADKLEKKAQSLFEDTKSTGEEGGDDSNEI) is disordered. Residues 9–33 (RRVEKSADKLEKKAQSLFEDTKSTG) are compositionally biased toward basic and acidic residues. 2 Pumilio repeats span residues 91–126 (EARG…NIFG) and 127–162 (QFSG…ELIH). The tract at residues 161–180 (IHDDSSQNEEEREEQEEGEV) is disordered. Positions 166 to 180 (SQNEEEREEQEEGEV) are enriched in acidic residues. Pumilio repeat units lie at residues 194 to 230 (EFKP…TTTS), 279 to 314 (QNSK…RTFW), 328 to 365 (QEEA…RLYK), 519 to 556 (LPVE…PVLI), and 563 to 601 (NLFK…RIGT). Over residues 676 to 702 (LREEAAAKSESGYKRRHEDDNEDDYAK) the composition is skewed to basic and acidic residues. A disordered region spans residues 676 to 711 (LREEAAAKSESGYKRRHEDDNEDDYAKKQKLRGRRR).

This sequence belongs to the NOP9 family.

Its subcellular location is the nucleus. It is found in the nucleolus. Its function is as follows. RNA-binding nucleolar protein required for pre-rRNA processing. Involved in production of 18S rRNA and assembly of small ribosomal subunit. This is Nucleolar protein 9 (NOP9) from Scheffersomyces stipitis (strain ATCC 58785 / CBS 6054 / NBRC 10063 / NRRL Y-11545) (Yeast).